We begin with the raw amino-acid sequence, 264 residues long: COP9 signalosome complex subunit 7b (264 aa).

Position 2 is an N-acetylalanine (A2). The 158-residue stretch at 2–159 (AGEQKPSSNL…QLLEVDFCIG (158 aa)) folds into the PCI domain. Residues 188–237 (IEQQVLRANQYKENHNRTQQQVEAEVTNIKKTLKATASSSAQEMEQQLAE) are a coiled coil. Residues 223 to 232 (TASSSAQEME) show a composition bias toward polar residues. Residues 223 to 264 (TASSSAQEMEQQLAERECPPHAEQRQPTKKMSKVKGLVSSRH) form a disordered region. Residues 235–248 (LAERECPPHAEQRQ) show a composition bias toward basic and acidic residues. S261 carries the post-translational modification Phosphothreonine. At R263 the chain carries Phosphoserine.

This sequence belongs to the CSN7/EIF3M family. CSN7 subfamily. As to quaternary structure, component of the CSN complex, composed of COPS1/GPS1, COPS2, COPS3, COPS4, COPS5, COPS6, COPS7 (COPS7A or COPS7B), COPS8 and COPS9 isoform 1. In the complex, it probably interacts directly with COPS1, COPS2, COPS4, COPS5, COPS6 and COPS8. Interacts with EIF3S6. In terms of assembly, (Microbial infection) Interacts with vaccinia virus protein C9L.

It is found in the cytoplasm. It localises to the nucleus. Functionally, component of the COP9 signalosome complex (CSN), a complex involved in various cellular and developmental processes. The CSN complex is an essential regulator of the ubiquitin (Ubl) conjugation pathway by mediating the deneddylation of the cullin subunits of SCF-type E3 ligase complexes, leading to decrease the Ubl ligase activity of SCF-type complexes such as SCF, CSA or DDB2. The complex is also involved in phosphorylation of p53/TP53, JUN, I-kappa-B-alpha/NFKBIA, ITPK1 and IRF8/ICSBP, possibly via its association with CK2 and PKD kinases. CSN-dependent phosphorylation of TP53 and JUN promotes and protects degradation by the Ubl system, respectively. In Homo sapiens (Human), this protein is COP9 signalosome complex subunit 7b (COPS7B).